The sequence spans 191 residues: Large ribosomal subunit protein uL5 (191 aa).

This sequence belongs to the universal ribosomal protein uL5 family. In terms of assembly, part of the 50S ribosomal subunit; part of the 5S rRNA/L5/L18/L25 subcomplex. Contacts the 5S rRNA and the P site tRNA. Forms a bridge to the 30S subunit in the 70S ribosome.

In terms of biological role, this is one of the proteins that bind and probably mediate the attachment of the 5S RNA into the large ribosomal subunit, where it forms part of the central protuberance. In the 70S ribosome it contacts protein S13 of the 30S subunit (bridge B1b), connecting the 2 subunits; this bridge is implicated in subunit movement. Contacts the P site tRNA; the 5S rRNA and some of its associated proteins might help stabilize positioning of ribosome-bound tRNAs. This is Large ribosomal subunit protein uL5 from Micrococcus luteus (strain ATCC 4698 / DSM 20030 / JCM 1464 / CCM 169 / CCUG 5858 / IAM 1056 / NBRC 3333 / NCIMB 9278 / NCTC 2665 / VKM Ac-2230) (Micrococcus lysodeikticus).